The following is a 793-amino-acid chain: PKNSEEQKITEMVYNIFRILLYHAIKYEWGGWRVWVDTLSIAHSKVTYEAHKEYLAKMYEEYQRQEEENIKKGKKGNVSTISGLSSQTTGAKGGMEIREIEDLSQSQSPESETDYPVSTDTRDLLMATKVSDDVLGSAERPGGGVHVEVHDLLVDIKAERVEATEVKLDDMDLSPETLVTGENGALVEVESLLDNVYSAAVEKLQNSVHGSVGIIKKNEEKDGGPLITLADEKDEPSTNSTSFLFDKIPSQEEKLLPDLSISHISIPNVQDTQMHLGVNDDLGLLAHMTGGVDITSTSSIIEDKEFKIHTNSVGMSSIFERELASLFKGLEYAEMTATTPETEFFCSKTVPNVDAGSIISVTERFVDGKEAGKEIRKIQTTTTTQAVQGRSVTQQDRDLRVDLGFRGMPMTEEQRRQFSPGPRTNMFRIPEFKWSPMHQRLLTDLLFALETDVHVWRSHSTKSVMDFVNSNENIIFVHNTIHLISQMVDNIIIACGGILPLLSAATSPTGSKTELENIEVTQGMSAETAVTFLSRLMAMVDVLVFASSLNFSEIEAEKNMSSGGLMRQCLRLVCCVAVRNCLECRQRQRERVNKTSLISSKAQDALQGVTASAATKTPLENVPGNLSPIKDPDRLLQDVDINRLRAVVFRDVDDSKQAQFLALAVVYFISVLMVSKYRDILEPQRETARSGSQAGRNIRQEINSPTSTETPAVFPENIKDKETPTPVEDIQLESSIPHTDSGIGEEQMPNILNGTDLETSTGPDAMSELLSTLSSEVKKSQESLTESPSEILK.

Disordered stretches follow at residues 68-92 (ENIK…TGAK) and 685-793 (RETA…EILK). 4 stretches are compositionally biased toward polar residues: residues 77–90 (NVST…QTTG), 689–710 (RSGS…STET), 750–762 (NILN…TSTG), and 782–793 (ESLTESPSEILK).

The protein belongs to the WD repeat neurobeachin family. In terms of assembly, interacts with RII subunit of PKA. Forebrain and cerebellum.

The protein resides in the cytoplasm. The protein localises to the membrane. Functionally, binds to type II regulatory subunits of protein kinase A and anchors/targets them to the membrane. May anchor the kinase to cytoskeletal and/or organelle-associated proteins. The sequence is that of Neurobeachin (NBEA) from Gallus gallus (Chicken).